The following is a 669-amino-acid chain: DNA ligase (669 aa).

NAD(+)-binding positions include 34 to 38 (DAEYD), 83 to 84 (SL), and glutamate 114. The active-site N6-AMP-lysine intermediate is lysine 116. Arginine 137, glutamate 171, lysine 287, and lysine 311 together coordinate NAD(+). The Zn(2+) site is built by cysteine 405, cysteine 408, cysteine 423, and cysteine 428. Residues 591 to 669 (NVESYFAGKT…EERFLQELNK (79 aa)) enclose the BRCT domain.

This sequence belongs to the NAD-dependent DNA ligase family. LigA subfamily. Mg(2+) serves as cofactor. The cofactor is Mn(2+).

It catalyses the reaction NAD(+) + (deoxyribonucleotide)n-3'-hydroxyl + 5'-phospho-(deoxyribonucleotide)m = (deoxyribonucleotide)n+m + AMP + beta-nicotinamide D-nucleotide.. In terms of biological role, DNA ligase that catalyzes the formation of phosphodiester linkages between 5'-phosphoryl and 3'-hydroxyl groups in double-stranded DNA using NAD as a coenzyme and as the energy source for the reaction. It is essential for DNA replication and repair of damaged DNA. The protein is DNA ligase of Bacillus mycoides (strain KBAB4) (Bacillus weihenstephanensis).